We begin with the raw amino-acid sequence, 608 residues long: Glutamine--fructose-6-phosphate aminotransferase [isomerizing] (608 aa).

Cys-2 (nucleophile; for GATase activity) is an active-site residue. The Glutamine amidotransferase type-2 domain occupies 2–217; sequence CGIVGYIGDK…DHEIAIIKKD (216 aa). SIS domains lie at 285–424 and 453–598; these read TKED…KKGT and VIQK…VDKP. Lys-603 acts as the For Fru-6P isomerization activity in catalysis.

As to quaternary structure, homodimer.

It localises to the cytoplasm. It catalyses the reaction D-fructose 6-phosphate + L-glutamine = D-glucosamine 6-phosphate + L-glutamate. In terms of biological role, catalyzes the first step in hexosamine metabolism, converting fructose-6P into glucosamine-6P using glutamine as a nitrogen source. The sequence is that of Glutamine--fructose-6-phosphate aminotransferase [isomerizing] from Caldanaerobacter subterraneus subsp. tengcongensis (strain DSM 15242 / JCM 11007 / NBRC 100824 / MB4) (Thermoanaerobacter tengcongensis).